A 367-amino-acid polypeptide reads, in one-letter code: 5-amino-6-(D-ribitylamino)uracil--L-tyrosine 4-hydroxyphenyl transferase (367 aa).

The 235-residue stretch at Val56–Asp290 folds into the Radical SAM core domain. The [4Fe-4S] cluster site is built by Cys70, Cys74, and Cys77.

It belongs to the radical SAM superfamily. CofH family. In terms of assembly, consists of two subunits, CofG and CofH. It depends on [4Fe-4S] cluster as a cofactor.

The enzyme catalyses 5-amino-6-(D-ribitylamino)uracil + L-tyrosine + S-adenosyl-L-methionine = 5-amino-5-(4-hydroxybenzyl)-6-(D-ribitylimino)-5,6-dihydrouracil + 2-iminoacetate + 5'-deoxyadenosine + L-methionine + H(+). It functions in the pathway cofactor biosynthesis; coenzyme F0 biosynthesis. In terms of biological role, catalyzes the radical-mediated synthesis of 5-amino-5-(4-hydroxybenzyl)-6-(D-ribitylimino)-5,6-dihydrouracil from 5-amino-6-(D-ribitylamino)uracil and L-tyrosine. The chain is 5-amino-6-(D-ribitylamino)uracil--L-tyrosine 4-hydroxyphenyl transferase from Methanoculleus marisnigri (strain ATCC 35101 / DSM 1498 / JR1).